Consider the following 70-residue polypeptide: Large ribosomal subunit protein eL24 (70 aa).

The Zn(2+) site is built by Cys-6, Cys-9, Cys-32, and Cys-36. The segment at 6 to 36 (CSYCGRPIPPGYGIMYVRVDGVVLRFCSRRC) adopts a C4-type zinc-finger fold.

Belongs to the eukaryotic ribosomal protein eL24 family. In terms of assembly, part of the 50S ribosomal subunit. Forms a cluster with proteins L3 and L14. Zn(2+) is required as a cofactor.

In terms of biological role, binds to the 23S rRNA. This is Large ribosomal subunit protein eL24 from Caldivirga maquilingensis (strain ATCC 700844 / DSM 13496 / JCM 10307 / IC-167).